Consider the following 181-residue polypeptide: Protein GrpE (181 aa).

A disordered region spans residues 1–21; sequence MNKEQQDLQTEQEAAVETAEL. Residues 8–21 show a composition bias toward low complexity; sequence LQTEQEAAVETAEL.

The protein belongs to the GrpE family. As to quaternary structure, homodimer.

It is found in the cytoplasm. Participates actively in the response to hyperosmotic and heat shock by preventing the aggregation of stress-denatured proteins, in association with DnaK and GrpE. It is the nucleotide exchange factor for DnaK and may function as a thermosensor. Unfolded proteins bind initially to DnaJ; upon interaction with the DnaJ-bound protein, DnaK hydrolyzes its bound ATP, resulting in the formation of a stable complex. GrpE releases ADP from DnaK; ATP binding to DnaK triggers the release of the substrate protein, thus completing the reaction cycle. Several rounds of ATP-dependent interactions between DnaJ, DnaK and GrpE are required for fully efficient folding. The protein is Protein GrpE of Trichlorobacter lovleyi (strain ATCC BAA-1151 / DSM 17278 / SZ) (Geobacter lovleyi).